The sequence spans 227 residues: Charged multivesicular body protein 4b (227 aa).

Disordered regions lie at residues 1–26 (MSGILGKLFGAGAGGKGAGKGPSPQE) and 186–227 (SGPE…AGNM). The segment covering 9 to 20 (FGAGAGGKGAGK) has biased composition (gly residues). Positions 25 to 185 (QEAIQRLRDT…EELDKNLLEI (161 aa)) form a coiled coil.

It belongs to the SNF7 family. In terms of assembly, probable core component of the endosomal sorting required for transport complex III (ESCRT-III). ESCRT-III components are thought to multimerize to form a flat lattice on the perimeter membrane of the endosome.

The protein resides in the cytoplasm. It is found in the cytosol. It localises to the late endosome membrane. Its subcellular location is the midbody. Functionally, probable core component of the endosomal sorting required for transport complex III (ESCRT-III) which is involved in multivesicular bodies (MVBs) formation and sorting of endosomal cargo proteins into MVBs. MVBs contain intraluminal vesicles (ILVs) that are generated by invagination and scission from the limiting membrane of the endosome and mostly are delivered to lysosomes enabling degradation of membrane proteins, such as stimulated growth factor receptors, lysosomal enzymes and lipids. The protein is Charged multivesicular body protein 4b (CHMP4B) of Gallus gallus (Chicken).